The primary structure comprises 426 residues: Gamma-glutamyl phosphate reductase (426 aa).

Belongs to the gamma-glutamyl phosphate reductase family.

Its subcellular location is the cytoplasm. It carries out the reaction L-glutamate 5-semialdehyde + phosphate + NADP(+) = L-glutamyl 5-phosphate + NADPH + H(+). It functions in the pathway amino-acid biosynthesis; L-proline biosynthesis; L-glutamate 5-semialdehyde from L-glutamate: step 2/2. Functionally, catalyzes the NADPH-dependent reduction of L-glutamate 5-phosphate into L-glutamate 5-semialdehyde and phosphate. The product spontaneously undergoes cyclization to form 1-pyrroline-5-carboxylate. The protein is Gamma-glutamyl phosphate reductase of Deinococcus geothermalis (strain DSM 11300 / CIP 105573 / AG-3a).